Reading from the N-terminus, the 973-residue chain is MDLDPHAGVQVGMRVVRGMDWKWGQQDGGEGGVGTVVELGRHGSPSTPDRTVVVQWDQGTRTNYRAGYQGAHDLLLYDNAQIGIRHPNIICDCCKKHGLRGMRWKCRVCFDYDLCTQCYMHNKHDLTHAFERYETSHSRPVTLSPRQGLPRIPLRGIFQGAKVVRGPDWEWGSQDGGEGKTGRVVDIRGWDVETGRSVASVTWADGTTNVYRVGHKGKVDLRCVGEAAGGFYYKEHLPKLGKPAELQRRVSADGQPFQRGDKVKCLLDTDVLRDMQEGHGGWNPRMAEFIGQMGTVHRITDRGDVRVQFNHETRWTFHPGALTKHNSFWVGDVVRVIGDLDTVKRLQAGHGEWTDDMAPALGRVGKVVKVFGDGNLRVAVGGQRWTFSPSCLVAYRPEEDANLDVAERARENKSAASVSVAGSLSVALDKLRTQKSDPEHPGRLVVEAALGNVARALDLLRRHPEQASYHPALVVDTKNQGRTALQVAAYLGQVELVRLLLQARASMDLPDDEGNTVLHYTAMGNQPEATRVLLSAGCAVDARNGTRSTALHVAVQRGFLEVVKILCERGCDVNLPDAHADTPLHSAISAGAGASSIVEVLTEVPGIDVTATNSQGFTLLHHASLKGHVLAVRKILARARQLVDAKKEDGFTALHLAALNNHREVAQVLIREGRCDVNVRNRKLQSPLHLAVQQAHLGLVPLLVDAGCSVNTEDEEGDTALHVALQRHQLLPLVADRAGGDPGPLQLLSRLQASGLPGCTELTVGAAVACFLALEGADVSYANHRGRSPLDLATEGRVLKALQGCAQRFRERQAGGGGGVPPGPRHVLSTPNTVTNLHVSGTAGPEAAECLVCSELALLILFSPCQHRTVCEECARRMKKCIRCQVVISKKLRPDGSEVVNAIQVPGPPRQLVEELQSRYRQMEERITCPICIDSHIRLVFQCGHGACAPCGAALNACPICRQPIRDRIQIFV.

The MIB/HERC2 1 domain occupies 1–80 (MDLDPHAGVQ…AHDLLLYDNA (80 aa)). A ZZ-type zinc finger spans residues 86–138 (HPNIICDCCKKHGLRGMRWKCRVCFDYDLCTQCYMHNKHDLTHAFERYETSHS). Zn(2+) contacts are provided by C91, C94, C106, C109, C115, C118, H124, and H128. The region spanning 149 to 227 (LPRIPLRGIF…KVDLRCVGEA (79 aa)) is the MIB/HERC2 2 domain. S251 carries the post-translational modification Phosphoserine. ANK repeat units follow at residues 480-509 (QGRT…SMDL), 513-542 (EGNT…AVDA), 546-575 (TRST…DVNL), 579-611 (HADT…DVTA), 615-644 (QGFT…QLVD), 649-679 (DGFT…DVNV), 683-712 (KLQS…SVNT), 716-744 (EGDT…DPGP), and 785-814 (RGRS…ERQA). 2 consecutive RING-type zinc fingers follow at residues 850–885 (CLVC…IRCQ) and 929–962 (CPIC…PICR).

In terms of assembly, interacts with actin monomer. Post-translationally, ubiquitinated. Possibly via autoubiquitination. As to expression, highly expressed in brain, heart, liver and kidney.

The protein localises to the cytoplasm. It localises to the endosome. The enzyme catalyses S-ubiquitinyl-[E2 ubiquitin-conjugating enzyme]-L-cysteine + [acceptor protein]-L-lysine = [E2 ubiquitin-conjugating enzyme]-L-cysteine + N(6)-ubiquitinyl-[acceptor protein]-L-lysine.. It participates in protein modification; protein ubiquitination. Functionally, E3 ubiquitin-protein ligase that mediates ubiquitination of Delta receptors, which act as ligands of Notch proteins. Positively regulates the Delta-mediated Notch signaling by ubiquitinating the intracellular domain of Delta, leading to endocytosis of Delta receptors. The sequence is that of E3 ubiquitin-protein ligase MIB2 (Mib2) from Mus musculus (Mouse).